A 1889-amino-acid chain; its full sequence is Treslin (1889 aa).

S295, S599, S820, S861, S919, S934, S1002, S1027, and S1078 each carry phosphoserine. Residues 812–832 (DSMSQESMSPPPSSSTHRSVS) show a composition bias toward low complexity. The interval 812–836 (DSMSQESMSPPPSSSTHRSVSAITE) is disordered. The interval 979–1063 (RLLHRQIKGR…RENFPVQSIQ (85 aa)) is disordered. A compositionally biased stretch (polar residues) spans 1020–1050 (LSFSRTNSGSFYSVSQPKSRSVQRIHSSQQE). 6 disordered regions span residues 1098-1421 (EIST…SQFS), 1471-1508 (LPGE…SSSE), 1520-1543 (GKQR…SPQT), 1630-1714 (SCTP…SLEQ), 1730-1751 (VCQL…ETSW), and 1841-1875 (QGRT…TLSR). The segment covering 1127-1179 (TAQTLLYTPERLQNSPTEMTSAEGTISEATIKTPSSHGYNSPFASKVTSQKTV) has biased composition (polar residues). The residue at position 1134 (T1134) is a Phosphothreonine. At S1141 the chain carries Phosphoserine. A compositionally biased stretch (low complexity) spans 1187-1197 (SPPLTKLPSTP). A compositionally biased stretch (polar residues) spans 1203–1219 (QPPQCSSDCTWPHSVNS). The span at 1339–1351 (TSPSVTSSVSCPV) shows a compositional bias: low complexity. A compositionally biased stretch (basic residues) spans 1373-1382 (KLRRSCRKKS). S1406 carries the post-translational modification Phosphoserine. Positions 1496–1508 (LVPAPSSVSSSSE) are enriched in low complexity. 2 stretches are compositionally biased toward polar residues: residues 1525–1543 (DAAQ…SPQT) and 1652–1662 (WTPSPKQSGKT). Over residues 1705–1714 (PEGKERSLEQ) the composition is skewed to basic and acidic residues.

This sequence belongs to the treslin family. As to quaternary structure, interacts with TOPBP1 (via BRCT domains); interaction takes place in a CDK2-dependent manner. Component of the replisome complex composed of at least DONSON, MCM2, MCM7, PCNA and TICRR.

It localises to the nucleus. Its function is as follows. Regulator of DNA replication and S/M and G2/M checkpoints. Regulates the triggering of DNA replication initiation via its interaction with TOPBP1 by participating in CDK2-mediated loading of CDC45L onto replication origins. Required for the transition from pre-replication complex (pre-RC) to pre-initiation complex (pre-IC). Required to prevent mitotic entry after treatment with ionizing radiation. This chain is Treslin (Ticrr), found in Mus musculus (Mouse).